Reading from the N-terminus, the 633-residue chain is Extracellular metalloproteinase 3 (633 aa).

Positions 1-18 (MHGLLLAGLLALPMNVLA) are cleaved as a signal peptide. The propeptide occupies 19–246 (HPAEQHASNV…VHNVVDYVAS (228 aa)). N-linked (GlcNAc...) asparagine glycosylation is present at Asn410. Zn(2+) is bound at residue His429. Glu430 is a catalytic residue. His433 serves as a coordination point for Zn(2+). Residues Asn480 and Asn622 are each glycosylated (N-linked (GlcNAc...) asparagine).

This sequence belongs to the peptidase M36 family. Zn(2+) is required as a cofactor.

The protein localises to the secreted. Secreted metalloproteinase probably acting as a virulence factor. This chain is Extracellular metalloproteinase 3 (MEP3), found in Trichophyton tonsurans (Scalp ringworm fungus).